Here is a 118-residue protein sequence, read N- to C-terminus: Developmental pluripotency-associated protein 5A (118 aa).

The KH; atypical domain maps to P24–L86.

Belongs to the KHDC1 family.

It localises to the cytoplasm. Its function is as follows. Involved in the maintenance of embryonic stem (ES) cell pluripotency. Dispensable for self-renewal of pluripotent ES cells and establishment of germ cells. Associates with specific target mRNAs. This Mus musculus (Mouse) protein is Developmental pluripotency-associated protein 5A (Dppa5a).